Here is a 117-residue protein sequence, read N- to C-terminus: UPF0102 protein Swoo_0351 (117 aa).

Belongs to the UPF0102 family.

This Shewanella woodyi (strain ATCC 51908 / MS32) protein is UPF0102 protein Swoo_0351.